The sequence spans 173 residues: NADH-ubiquinone oxidoreductase chain 6 (173 aa).

The next 5 membrane-spanning stretches (helical) occupy residues 1-21, 24-44, 53-73, 86-106, and 139-159; these read MTYL…AVAS, APYF…GVLV, LVLF…SAAL, SVVG…GVFW, and YGGG…FVVL.

This sequence belongs to the complex I subunit 6 family.

It localises to the mitochondrion membrane. The enzyme catalyses a ubiquinone + NADH + 5 H(+)(in) = a ubiquinol + NAD(+) + 4 H(+)(out). Its function is as follows. Core subunit of the mitochondrial membrane respiratory chain NADH dehydrogenase (Complex I) that is believed to belong to the minimal assembly required for catalysis. Complex I functions in the transfer of electrons from NADH to the respiratory chain. The immediate electron acceptor for the enzyme is believed to be ubiquinone. This is NADH-ubiquinone oxidoreductase chain 6 (MT-ND6) from Formosania lacustris (Oriental stream loach).